Here is a 163-residue protein sequence, read N- to C-terminus: Bursicon (163 aa).

A signal peptide spans 1–23 (MKSTFLVVLELAFFLLPGRVLYA). 5 disulfide bridges follow: Cys39/Cys88, Cys53/Cys102, Cys63/Cys123, Cys67/Cys125, and Cys85/Cys128. One can recognise a CTCK domain in the interval 39–129 (CQVTPVIHVL…PLECMCRPCT (91 aa)).

In terms of assembly, heterodimer of burs and pburs.

It is found in the secreted. Final heterodimeric neurohormone released at the end of the molting cycle, involved in the sclerotization (tanning) of the insect cuticle, melanization and wing spreading. This is Bursicon (burs124) from Anopheles gambiae (African malaria mosquito).